Here is a 71-residue protein sequence, read N- to C-terminus: Conotoxin Vc6.12 (71 aa).

The signal sequence occupies residues 1–19 (MQKLIILLLVAAVLMSTQA). The propeptide occupies 20-43 (LFQEKRPMKKINFLSKGKTDAEKQ). 3 disulfides stabilise this stretch: C48–C62, C55–C66, and C61–C70.

The protein belongs to the conotoxin O2 superfamily. As to expression, expressed by the venom duct.

It is found in the secreted. In terms of biological role, inhibits voltage-gated ion channels. The chain is Conotoxin Vc6.12 from Conus victoriae (Queen Victoria cone).